We begin with the raw amino-acid sequence, 172 residues long: Caltractin (172 aa).

The disordered stretch occupies residues 1 to 23 (MQKYGSKKIGATSATSSNKQKVQ). Polar residues predominate over residues 12 to 21 (TSATSSNKQK). EF-hand domains follow at residues 29-64 (EQRQ…LGFE), 65-99 (PKKE…KMSE), 101-136 (DSHA…LGEN), and 137-172 (MTDE…TNLF). The Ca(2+) site is built by aspartate 42, aspartate 44, serine 46, lysine 48, and glutamate 53.

This sequence belongs to the centrin family. As to quaternary structure, monomer.

It localises to the cytoplasm. Its subcellular location is the cytoskeleton. It is found in the microtubule organizing center. The protein resides in the centrosome. Its function is as follows. Plays a fundamental role in microtubule-organizing center structure and function. This is Caltractin (CTN) from Naegleria gruberi (Amoeba).